A 614-amino-acid polypeptide reads, in one-letter code: Sulfite reductase [NADPH] flavoprotein alpha-component (614 aa).

Positions 79 to 217 (LTIIFASQTG…AATEWRKQVL (139 aa)) constitute a Flavodoxin-like domain. FMN contacts are provided by residues 85 to 90 (SQTGNA), 132 to 135 (STNG), and 168 to 177 (LGDSSYQFFC). The FAD-binding FR-type domain maps to 249-463 (EQPYTASLST…VEHNNNFKLP (215 aa)). Residues Thr-337, Thr-371, 401-404 (RLYS), 419-421 (TVG), Tyr-425, and 434-437 (GGAS) each bind FAD. NADP(+) is bound by residues 534–535 (SR), 540–544 (KVYVQ), and Asp-576. FAD is bound at residue Tyr-614.

The protein belongs to the NADPH-dependent sulphite reductase flavoprotein subunit CysJ family. It in the N-terminal section; belongs to the flavodoxin family. This sequence in the C-terminal section; belongs to the flavoprotein pyridine nucleotide cytochrome reductase family. Alpha(8)-beta(8). The alpha component is a flavoprotein, the beta component is a hemoprotein. Requires FAD as cofactor. The cofactor is FMN.

The enzyme catalyses hydrogen sulfide + 3 NADP(+) + 3 H2O = sulfite + 3 NADPH + 4 H(+). It participates in sulfur metabolism; hydrogen sulfide biosynthesis; hydrogen sulfide from sulfite (NADPH route): step 1/1. Component of the sulfite reductase complex that catalyzes the 6-electron reduction of sulfite to sulfide. This is one of several activities required for the biosynthesis of L-cysteine from sulfate. The flavoprotein component catalyzes the electron flow from NADPH -&gt; FAD -&gt; FMN to the hemoprotein component. The polypeptide is Sulfite reductase [NADPH] flavoprotein alpha-component (Vibrio cholerae serotype O1 (strain ATCC 39315 / El Tor Inaba N16961)).